The sequence spans 355 residues: Elongation factor Ts (355 aa).

The segment at 82–85 (TDFV) is involved in Mg(2+) ion dislocation from EF-Tu.

It belongs to the EF-Ts family.

The protein localises to the cytoplasm. Associates with the EF-Tu.GDP complex and induces the exchange of GDP to GTP. It remains bound to the aminoacyl-tRNA.EF-Tu.GTP complex up to the GTP hydrolysis stage on the ribosome. The chain is Elongation factor Ts from Helicobacter pylori (strain Shi470).